Here is a 95-residue protein sequence, read N- to C-terminus: Putative septation protein SpoVG (95 aa).

The protein belongs to the SpoVG family.

Could be involved in septation. The sequence is that of Putative septation protein SpoVG from Clostridium acetobutylicum (strain ATCC 824 / DSM 792 / JCM 1419 / IAM 19013 / LMG 5710 / NBRC 13948 / NRRL B-527 / VKM B-1787 / 2291 / W).